The chain runs to 305 residues: Beta-lactamase ROB-1 (305 aa).

The signal sequence occupies residues 1–33 (MLNKLKIGTLLLLTLTACSPNSVHSVTSNPQPA). Catalysis depends on Ser86, which acts as the Acyl-ester intermediate. 248–250 (KSG) contacts substrate.

This sequence belongs to the class-A beta-lactamase family.

It carries out the reaction a beta-lactam + H2O = a substituted beta-amino acid. The polypeptide is Beta-lactamase ROB-1 (rob1) (Actinobacillus pleuropneumoniae (Haemophilus pleuropneumoniae)).